The primary structure comprises 600 residues: Probable methyltransferase PMT21 (600 aa).

The Cytoplasmic segment spans residues 1–16 (MKYKDEKYEKAEKGSR). A helical; Signal-anchor for type II membrane protein membrane pass occupies residues 17–37 (ILPKTVLLILLCGLSFYLGGL). Residues 38 to 600 (YCGKNIIEVS…YSSNASSETN (563 aa)) are Lumenal-facing. N594 carries an N-linked (GlcNAc...) asparagine glycan.

The protein belongs to the methyltransferase superfamily.

The protein localises to the endoplasmic reticulum membrane. The sequence is that of Probable methyltransferase PMT21 (ERD3) from Arabidopsis thaliana (Mouse-ear cress).